Here is a 199-residue protein sequence, read N- to C-terminus: Chaperone protein TorD (199 aa).

Belongs to the TorD/DmsD family. TorD subfamily.

It is found in the cytoplasm. Its function is as follows. Involved in the biogenesis of TorA. Acts on TorA before the insertion of the molybdenum cofactor and, as a result, probably favors a conformation of the apoenzyme that is competent for acquiring the cofactor. The polypeptide is Chaperone protein TorD (Escherichia coli O7:K1 (strain IAI39 / ExPEC)).